The sequence spans 142 residues: Maximins y/Hv type 1 (142 aa).

Residues 1–18 form the signal peptide; that stretch reads MNFKYIVAVSFLIASGYA. Residues 19 to 43 constitute a propeptide that is removed on maturation; the sequence is RSEENDVQSLSQREVLEEESLREIR. At Phe68 the chain carries Phenylalanine amide. Residues 72–121 constitute a propeptide that is removed on maturation; it reads TAEDHEVMKRLEAVMRDLDSLDHPEEASERETRGFNQEEIANLFTKKEKR. The residue at position 141 (Ile141) is an Isoleucine amide.

It belongs to the bombinin family. Expressed by the skin glands.

Its subcellular location is the secreted. Maximin-y shows antimicrobial activity against bacteria and against the fungus C.albicans. It has little hemolytic activity. In terms of biological role, maximin-Hv shows antimicrobial activity against bacteria and against the fungus C.albicans. Shows strong hemolytic activity. The sequence is that of Maximins y/Hv type 1 from Bombina maxima (Giant fire-bellied toad).